A 173-amino-acid chain; its full sequence is MKETIRIIGIDPGLRRTGWGIVESLGNSLHFIGSGTVTSNAEMDLASRLCQLHEGLSKVLHEFMPHEAAVEHTFVNKDATATLKLGQARGIALLAPAQAGLPVTEYAPNAVKKAVIGVGHGEKQQIHMMVKVLMPRASFDTSDAADALAIAICHAHHRQSIVSARRMQALLAG.

Active-site residues include aspartate 11, glutamate 71, and aspartate 143. The Mg(2+) site is built by aspartate 11, glutamate 71, and aspartate 143.

It belongs to the RuvC family. As to quaternary structure, homodimer which binds Holliday junction (HJ) DNA. The HJ becomes 2-fold symmetrical on binding to RuvC with unstacked arms; it has a different conformation from HJ DNA in complex with RuvA. In the full resolvosome a probable DNA-RuvA(4)-RuvB(12)-RuvC(2) complex forms which resolves the HJ. Mg(2+) serves as cofactor.

The protein localises to the cytoplasm. The catalysed reaction is Endonucleolytic cleavage at a junction such as a reciprocal single-stranded crossover between two homologous DNA duplexes (Holliday junction).. Its function is as follows. The RuvA-RuvB-RuvC complex processes Holliday junction (HJ) DNA during genetic recombination and DNA repair. Endonuclease that resolves HJ intermediates. Cleaves cruciform DNA by making single-stranded nicks across the HJ at symmetrical positions within the homologous arms, yielding a 5'-phosphate and a 3'-hydroxyl group; requires a central core of homology in the junction. The consensus cleavage sequence is 5'-(A/T)TT(C/G)-3'. Cleavage occurs on the 3'-side of the TT dinucleotide at the point of strand exchange. HJ branch migration catalyzed by RuvA-RuvB allows RuvC to scan DNA until it finds its consensus sequence, where it cleaves and resolves the cruciform DNA. This is Crossover junction endodeoxyribonuclease RuvC from Brucella suis (strain ATCC 23445 / NCTC 10510).